Here is a 305-residue protein sequence, read N- to C-terminus: tRNA pseudouridine synthase B (305 aa).

The active-site Nucleophile is the Asp-41.

Belongs to the pseudouridine synthase TruB family. Type 1 subfamily.

It catalyses the reaction uridine(55) in tRNA = pseudouridine(55) in tRNA. Its function is as follows. Responsible for synthesis of pseudouridine from uracil-55 in the psi GC loop of transfer RNAs. This Prochlorococcus marinus (strain MIT 9515) protein is tRNA pseudouridine synthase B.